The primary structure comprises 284 residues: MLSKQIPLGIYEKALPAGECWLERLRLAKTLGFDFVEMSVDETDERLSRLDWSREQRLALVNAIVETGVRVPSMCLSAHRRFPLGSEDDAVRAQGLEIMRKAIQFAQDVGIRVIQLAGYDVYYQEANNETRRRFRDGLKESVEMASRAQVTLAMEIMDYPLMNSISKALGYAHYLNNPWFQLYPDIGNLSAWDNDVQMELQAGIGHIVAVHVKDTKPGVFKNVPFGEGVVDFERCFETLKQSGYCGPYLIEMWSETAEDPAAEVAKARDWVKARMAKAGMVEAA.

Belongs to the L-ribulose-5-phosphate 3-epimerase family.

The catalysed reaction is L-ribulose 5-phosphate = L-xylulose 5-phosphate. It functions in the pathway cofactor degradation; L-ascorbate degradation; D-xylulose 5-phosphate from L-ascorbate: step 3/4. Functionally, catalyzes the isomerization of L-xylulose-5-phosphate to L-ribulose-5-phosphate. Is involved in the anaerobic L-ascorbate utilization. The sequence is that of L-ribulose-5-phosphate 3-epimerase UlaE from Escherichia coli (strain 55989 / EAEC).